A 278-amino-acid polypeptide reads, in one-letter code: Complement component 1 Q subcomponent-binding protein, mitochondrial (278 aa).

The N-terminal 70 residues, 1-70 (MFQLLRCVPR…PCACGCGCSG (70 aa)), are a transit peptide targeting the mitochondrion. Residues 73–90 (TEGDKAFVDFLSDEIKEE) form a C1q binding region. Ser84 carries the post-translational modification Phosphoserine. Residues Lys88 and Lys91 each carry the N6-acetyllysine modification. The tract at residues 136–164 (IPPAFGGEEEEPSQGQKAEEQEPELTSTP) is disordered. The segment at 166 to 209 (FVVEVTKDGSSKALVLDCHYPEDEIGQEDDQSDIFSIKEVSFQA) is interaction with MAVS. The residue at position 185 (Tyr185) is a Phosphotyrosine. 2 positions are modified to phosphoserine: Ser197 and Ser201. Thr210 is subject to Phosphothreonine.

The protein belongs to the MAM33 family. In terms of assembly, homotrimer; three monomers form a donut-shaped structure with an unusually asymmetric charge distribution on the surface. Interacts with CDK13, HRK, VTN, NFYB, ADRA1B, FOXC1, DDX21, DDX50, NCL, SRSF1 and SRSF9. Interacts with CD93; the association may represent a cell surface C1q receptor. Interacts with KRT1; the association represents a cell surface kininogen receptor. Interacts with CD209; the interaction is indicative for a C1q:C1QBP:CD209 signaling complex. Interacts with FBL and RRP1; the respective interactions with C1QBP are competitive. Probably associates with the mitoribosome. Interacts with MAVS; the interaction occurs upon viral transfection. Interacts with PPIF. Interacts with U2AF1L4. Interacts with PLEKHN1. Interacts with VGF-derived peptide TLQP-21. Interacts with MRE11 and RAD50; forming the MRC (MRE11-RAD50-C1QBP) complex that inhibits the activity of MRE11.

It is found in the mitochondrion matrix. It localises to the nucleus. The protein resides in the cell membrane. Its subcellular location is the secreted. The protein localises to the cytoplasm. It is found in the nucleolus. Functionally, multifunctional and multicompartmental protein involved in inflammation and infection processes, ribosome biogenesis, protein synthesis in mitochondria, regulation of apoptosis, transcriptional regulation and pre-mRNA splicing. At the cell surface is thought to act as an endothelial receptor for plasma proteins of the complement and kallikrein-kinin cascades. Putative receptor for C1q; specifically binds to the globular 'heads' of C1q thus inhibiting C1; may perform the receptor function through a complex with C1qR/CD93. In complex with cytokeratin-1/KRT1 is a high affinity receptor for kininogen-1/HMWK. Can also bind other plasma proteins, such as coagulation factor XII leading to its autoactivation. May function to bind initially fluid kininogen-1 to the cell membrane. The secreted form may enhance both extrinsic and intrinsic coagulation pathways. It is postulated that the cell surface form requires docking with transmembrane proteins for downstream signaling which might be specific for a cell-type or response. By acting as C1q receptor is involved in chemotaxis of immature dendritic cells and neutrophils and is proposed to signal through CD209/DC-SIGN on immature dendritic cells, through integrin alpha-4/beta-1 during trophoblast invasion of the decidua, and through integrin beta-1 during endothelial cell adhesion and spreading. Signaling involved in inhibition of innate immune response is implicating the PI3K-AKT/PKB pathway. Required for protein synthesis in mitochondria. In mitochondrial translation may be involved in formation of functional 55S mitoribosomes; the function seems to involve its RNA-binding activity. Acts as a RNA modification reader, which specifically recognizes and binds mitochondrial RNAs modified by C5-methylcytosine (m5C) in response to stress, and promotes recruitment of the mitochondrial degradosome complex, leading to their degradation. May be involved in the nucleolar ribosome maturation process; the function may involve the exchange of FBL for RRP1 in the association with pre-ribosome particles. Involved in regulation of RNA splicing by inhibiting the RNA-binding capacity of SRSF1 and its phosphorylation. Is required for the nuclear translocation of splicing factor U2AF1L4. Involved in regulation of CDKN2A- and HRK-mediated apoptosis. Stabilizes mitochondrial CDKN2A isoform smARF. May be involved in regulation of FOXC1 transcriptional activity and NFY/CCAAT-binding factor complex-mediated transcription. May play a role in antibacterial defense as it can bind to cell surface hyaluronan and inhibit Streptococcus pneumoniae hyaluronate lyase. May be involved in modulation of the immune response; ligation by HCV core protein is resulting in suppression of interleukin-12 production in monocyte-derived dendritic cells. Involved in regulation of antiviral response by inhibiting RIGI- and IFIH1-mediated signaling pathways probably involving its association with MAVS after viral infection. Acts as a regulator of DNA repair via homologous recombination by inhibiting the activity of MRE11: interacts with unphosphorylated MRE11 and RAD50 in absence of DNA damage, preventing formation and activity of the MRN complex. Following DNA damage, dissociates from phosphorylated MRE11, allowing formation of the MRN complex. This Bos taurus (Bovine) protein is Complement component 1 Q subcomponent-binding protein, mitochondrial (C1QBP).